The following is a 537-amino-acid chain: Beta-galactoside alpha-2,6-sialyltransferase 2 (537 aa).

Topologically, residues 1 to 10 (MKSWVRQGRR) are cytoplasmic. The helical; Signal-anchor for type II membrane protein transmembrane segment at 11-31 (LVLVGMLAWVLLFLALLSYFL) threads the bilayer. The Lumenal segment spans residues 32–537 (DARVNEPLTS…PGFSTVDCDI (506 aa)). Disordered regions lie at residues 83–117 (TRDEPRPSATPEFSLEASQSPDSAPLAIYGGPEGI) and 134–202 (GTEN…GDSS). The segment covering 134-145 (GTENIGSQSDPV) has biased composition (polar residues). The span at 166 to 185 (EEEEEEEEEEERQENEDEDV) shows a compositional bias: acidic residues. Intrachain disulfides connect Cys265–Cys535, Cys312–Cys464, and Cys482–Cys493. 2 N-linked (GlcNAc...) asparagine glycosylation sites follow: Asn353 and Asn373.

This sequence belongs to the glycosyltransferase 29 family.

It is found in the golgi apparatus. It localises to the golgi stack membrane. It catalyses the reaction a beta-D-galactoside + CMP-N-acetyl-beta-neuraminate = an N-acetyl-alpha-neuraminyl-(2-&gt;6)-beta-D-galactosyl derivative + CMP + H(+). In terms of biological role, transfers sialic acid from the donor of substrate CMP-sialic acid to galactose containing acceptor substrates. This Takifugu rubripes (Japanese pufferfish) protein is Beta-galactoside alpha-2,6-sialyltransferase 2 (st6gal2).